Reading from the N-terminus, the 375-residue chain is Carbamoyl phosphate synthase small chain (375 aa).

The interval 1 to 184 is CPSase; it reads MVSLYLENGL…LDYKPFDEKI (184 aa). Residues Ser-44, Gly-240, and Gly-242 each coordinate L-glutamine. The region spanning 188-375 is the Glutamine amidotransferase type-1 domain; sequence IIAVLDFGAK…KEFVGLLEGF (188 aa). Catalysis depends on Cys-268, which acts as the Nucleophile. Leu-269, Gln-272, Asn-310, and Tyr-313 together coordinate L-glutamine. Active-site residues include His-351 and Glu-353.

The protein belongs to the CarA family. Composed of two chains; the small (or glutamine) chain promotes the hydrolysis of glutamine to ammonia, which is used by the large (or ammonia) chain to synthesize carbamoyl phosphate. Tetramer of heterodimers (alpha,beta)4.

The enzyme catalyses hydrogencarbonate + L-glutamine + 2 ATP + H2O = carbamoyl phosphate + L-glutamate + 2 ADP + phosphate + 2 H(+). The catalysed reaction is L-glutamine + H2O = L-glutamate + NH4(+). It participates in amino-acid biosynthesis; L-arginine biosynthesis; carbamoyl phosphate from bicarbonate: step 1/1. Its pathway is pyrimidine metabolism; UMP biosynthesis via de novo pathway; (S)-dihydroorotate from bicarbonate: step 1/3. In terms of biological role, small subunit of the glutamine-dependent carbamoyl phosphate synthetase (CPSase). CPSase catalyzes the formation of carbamoyl phosphate from the ammonia moiety of glutamine, carbonate, and phosphate donated by ATP, constituting the first step of 2 biosynthetic pathways, one leading to arginine and/or urea and the other to pyrimidine nucleotides. The small subunit (glutamine amidotransferase) binds and cleaves glutamine to supply the large subunit with the substrate ammonia. This Helicobacter pylori (strain J99 / ATCC 700824) (Campylobacter pylori J99) protein is Carbamoyl phosphate synthase small chain.